The chain runs to 591 residues: V-type ATP synthase alpha chain (591 aa).

An ATP-binding site is contributed by 233 to 240; the sequence is GPFGAGKT.

It belongs to the ATPase alpha/beta chains family.

It catalyses the reaction ATP + H2O + 4 H(+)(in) = ADP + phosphate + 5 H(+)(out). In terms of biological role, produces ATP from ADP in the presence of a proton gradient across the membrane. The V-type alpha chain is a catalytic subunit. The chain is V-type ATP synthase alpha chain from Streptococcus pyogenes serotype M28 (strain MGAS6180).